The following is a 383-amino-acid chain: ATP phosphoribosyltransferase regulatory subunit (383 aa).

This sequence belongs to the class-II aminoacyl-tRNA synthetase family. HisZ subfamily. In terms of assembly, heteromultimer composed of HisG and HisZ subunits.

It is found in the cytoplasm. The protein operates within amino-acid biosynthesis; L-histidine biosynthesis; L-histidine from 5-phospho-alpha-D-ribose 1-diphosphate: step 1/9. Its function is as follows. Required for the first step of histidine biosynthesis. May allow the feedback regulation of ATP phosphoribosyltransferase activity by histidine. The sequence is that of ATP phosphoribosyltransferase regulatory subunit from Cupriavidus metallidurans (strain ATCC 43123 / DSM 2839 / NBRC 102507 / CH34) (Ralstonia metallidurans).